Consider the following 266-residue polypeptide: Glucosamine-6-phosphate deaminase (266 aa).

The Proton acceptor; for enolization step role is filled by Asp-72. The For ring-opening step role is filled by Asp-141. His-143 acts as the Proton acceptor; for ring-opening step in catalysis. Residue Glu-148 is the For ring-opening step of the active site.

The protein belongs to the glucosamine/galactosamine-6-phosphate isomerase family. NagB subfamily. Homohexamer; trimer of disulfide-linked dimers.

It catalyses the reaction alpha-D-glucosamine 6-phosphate + H2O = beta-D-fructose 6-phosphate + NH4(+). The protein operates within amino-sugar metabolism; N-acetylneuraminate degradation; D-fructose 6-phosphate from N-acetylneuraminate: step 5/5. Allosterically activated by N-acetylglucosamine 6-phosphate (GlcNAc6P). Catalyzes the reversible isomerization-deamination of glucosamine 6-phosphate (GlcN6P) to form fructose 6-phosphate (Fru6P) and ammonium ion. The protein is Glucosamine-6-phosphate deaminase of Shigella flexneri serotype 5b (strain 8401).